We begin with the raw amino-acid sequence, 405 residues long: Divinyl chlorophyllide a 8-vinyl-reductase, chloroplastic (405 aa).

The N-terminal 58 residues, 1-58, are a transit peptide targeting the chloroplast; that stretch reads MAALLLSSHLTAASSSSTTSPTARPAPSFVSFRAANAAPKGARRGWPFLASSVEPPPA.

It localises to the plastid. Its subcellular location is the chloroplast. It carries out the reaction protochlorophyllide a + NADP(+) = 3,8-divinyl protochlorophyllide a + NADPH + H(+). Its pathway is porphyrin-containing compound metabolism; chlorophyll biosynthesis. In terms of biological role, catalyzes the conversion of divinyl chlorophyllide to monovinyl chlorophyllide. Reduces the 8-vinyl group of the tetrapyrrole to an ethyl group using NADPH as the reductant. Can use (3,8-divinyl)-chlorophyllide a (DV-Chlidea) &gt; (3,8-divinyl)-chlorophyll a (DV-Chla) &gt; (3,8-divinyl)-protochlorophyllide a (DV-Pchlidea) &gt; (3,8-divinyl)-magnesium-protoporphyrin IX monomethyl ester (DV-MPE) &gt; (3,8-divinyl)-magnesium-protoporphyrin IX (DV-Mg-Proto) as substrates. The sequence is that of Divinyl chlorophyllide a 8-vinyl-reductase, chloroplastic (DVR) from Oryza sativa subsp. indica (Rice).